The following is a 518-amino-acid chain: Membrane-bound lytic murein transglycosylase F (518 aa).

Positions 1–21 are cleaved as a signal peptide; it reads MKKLKINYLFIGILALLLAVA. Positions 22-269 are non-LT domain; the sequence is LWPSIPWFGK…RIEEKYLGHG (248 aa). Residues 270–518 form an LT domain region; that stretch reads DDFDYVDTRT…SRKGSEEKQN (249 aa). Residue glutamate 314 is part of the active site.

The protein in the N-terminal section; belongs to the bacterial solute-binding protein 3 family. In the C-terminal section; belongs to the transglycosylase Slt family.

The protein resides in the cell outer membrane. The catalysed reaction is Exolytic cleavage of the (1-&gt;4)-beta-glycosidic linkage between N-acetylmuramic acid (MurNAc) and N-acetylglucosamine (GlcNAc) residues in peptidoglycan, from either the reducing or the non-reducing ends of the peptidoglycan chains, with concomitant formation of a 1,6-anhydrobond in the MurNAc residue.. Murein-degrading enzyme that degrades murein glycan strands and insoluble, high-molecular weight murein sacculi, with the concomitant formation of a 1,6-anhydromuramoyl product. Lytic transglycosylases (LTs) play an integral role in the metabolism of the peptidoglycan (PG) sacculus. Their lytic action creates space within the PG sacculus to allow for its expansion as well as for the insertion of various structures such as secretion systems and flagella. This is Membrane-bound lytic murein transglycosylase F from Shigella sonnei (strain Ss046).